The following is a 799-amino-acid chain: High affinity nerve growth factor receptor (799 aa).

An N-terminal signal peptide occupies residues methionine 1–alanine 33. Topologically, residues alanine 34–glycine 420 are extracellular. Disulfide bonds link cysteine 36-cysteine 41 and cysteine 40-cysteine 50. Asparagine 67 carries an N-linked (GlcNAc...) asparagine glycan. LRR repeat units follow at residues leucine 90–phenylalanine 113 and arginine 116–glycine 137. Residues asparagine 121, asparagine 190, asparagine 204, asparagine 255, asparagine 264, asparagine 320, asparagine 325, asparagine 341, asparagine 361, and asparagine 404 are each glycosylated (N-linked (GlcNAc...) asparagine). In terms of domain architecture, LRRCT spans asparagine 148–valine 219. The cysteines at positions 154 and 193 are disulfide-linked. Ig-like C2-type domains follow at residues proline 196–serine 285 and aspartate 205–asparagine 368. 2 disulfides stabilise this stretch: cysteine 217/cysteine 267 and cysteine 302/cysteine 348. A helical transmembrane segment spans residues valine 421–valine 441. Residues leucine 442 to glycine 799 lie on the Cytoplasmic side of the membrane. The interaction with SQSTM1 stretch occupies residues methionine 472–isoleucine 493. Tyrosine 499 bears the Phosphotyrosine; by autocatalysis mark. The Protein kinase domain occupies isoleucine 513–leucine 784. ATP-binding positions include leucine 519–valine 527 and lysine 547. Aspartate 653 (proton acceptor) is an active-site residue. Phosphotyrosine; by autocatalysis is present on residues tyrosine 679, tyrosine 683, tyrosine 684, and tyrosine 794.

Belongs to the protein kinase superfamily. Tyr protein kinase family. Insulin receptor subfamily. In terms of assembly, exists in a dynamic equilibrium between monomeric (low affinity) and dimeric (high affinity) structures. Homodimerization is induced by binding of a NGF dimer. Found in a complex, at least composed of KIDINS220, MAGI2, NTRK1 and RAPGEF2; the complex is mainly formed at late endosomes in a nerve growth factor (NGF)-dependent manner. Interacts with RAPGEF2; the interaction is strengthened after NGF stimulation. Interacts with SQSTM1; bridges NTRK1 to NGFR. Forms a ternary complex with NGFR and KIDINS220; this complex is affected by the expression levels of KIDINS220 and an increase in KIDINS220 expression leads to a decreased association of NGFR and NTRK1. Interacts (phosphorylated upon activation by NGF) with SHC1; mediates SHC1 phosphorylation and activation. Interacts (phosphorylated upon activation by NGF) with PLCG1; mediates PLCG1 phosphorylation and activation. Interacts (phosphorylated) with SH2B1 and SH2B2. Interacts with GRB2. Interacts with PIK3R1. Interacts with FRS2. Interacts with SORT1; may regulate NTRK1 anterograde axonal transport. Interacts with SH2D1A; regulates NTRK1. Interacts with NRADD. Interacts with RAB7A. Interacts with PTPRS. Interacts with USP36; USP36 does not deubiquitinate NTRK1. Interacts with GGA3. Interacts with TSPAN1; this interaction promotes NTRK1 stability. Post-translationally, ligand-mediated autophosphorylation. Interaction with SQSTM1 is phosphotyrosine-dependent. Autophosphorylation at Tyr-499 mediates interaction and phosphorylation of SHC1. In terms of processing, N-glycosylated. Ubiquitinated. Undergoes polyubiquitination upon activation; regulated by NGFR. Ubiquitination by NEDD4L leads to degradation. Ubiquitination regulates the internalization of the receptor.

The protein localises to the cell membrane. The protein resides in the early endosome membrane. It is found in the late endosome membrane. It localises to the recycling endosome membrane. The enzyme catalyses L-tyrosyl-[protein] + ATP = O-phospho-L-tyrosyl-[protein] + ADP + H(+). With respect to regulation, the pro-survival signaling effect of NTRK1 in neurons requires its endocytosis into signaling early endosomes and its retrograde axonal transport. This is regulated by different proteins including CFL1, RAC1 and SORT1. NTF3 is unable to induce this signaling probably due to the lability of the NTF3-NTRK1 complex in endosomes. SH2D1A inhibits the autophosphorylation of the receptor, and alters the recruitment and activation of downstream effectors and signaling cascades. Regulated by NGFR. Its function is as follows. Receptor tyrosine kinase involved in the development and the maturation of the central and peripheral nervous systems through regulation of proliferation, differentiation and survival of sympathetic and nervous neurons. High affinity receptor for NGF which is its primary ligand, it can also bind and be activated by NTF3/neurotrophin-3. However, NTF3 only supports axonal extension through NTRK1 but has no effect on neuron survival. Upon dimeric NGF ligand-binding, undergoes homodimerization, autophosphorylation and activation. Recruits, phosphorylates and/or activates several downstream effectors including SHC1, FRS2, SH2B1, SH2B2 and PLCG1 that regulate distinct overlapping signaling cascades driving cell survival and differentiation. Through SHC1 and FRS2 activates a GRB2-Ras-MAPK cascade that regulates cell differentiation and survival. Through PLCG1 controls NF-Kappa-B activation and the transcription of genes involved in cell survival. Through SHC1 and SH2B1 controls a Ras-PI3 kinase-AKT1 signaling cascade that is also regulating survival. In absence of ligand and activation, may promote cell death, making the survival of neurons dependent on trophic factors. The chain is High affinity nerve growth factor receptor (Ntrk1) from Mus musculus (Mouse).